A 628-amino-acid chain; its full sequence is Vacuolar-sorting receptor 4 (628 aa).

Positions 1–24 (MKQLLCYLPWLLLLSLVVSPFNEA) are cleaved as a signal peptide. Over 25–569 (RFVVEKNSLS…SKTGSQVKSA (545 aa)) the chain is Lumenal. The PA domain occupies 56 to 168 (QYGGSMAGTV…GFGEKLKKAI (113 aa)). 3 N-linked (GlcNAc...) asparagine glycosylation sites follow: Asn-148, Asn-294, and Asn-434. 2 EGF-like domains span residues 416–466 (ETNE…SHCE) and 469–516 (GPGR…KKCE). Intrachain disulfides connect Cys-420/Cys-438, Cys-427/Cys-447, Cys-449/Cys-465, Cys-473/Cys-493, Cys-480/Cys-501, Cys-503/Cys-515, and Cys-545/Cys-558. The EGF-like 3; calcium-binding domain occupies 517–559 (DINECKEKKACQCPECSCKNTWGSYECSCSGDLLYMRDHDTCI). Residues 570–590 (WAAVWLIMLSLGLAAAGAYLV) traverse the membrane as a helical segment. Residues 591-628 (YKYRLRQYMDSEIRAIMAQYMPLDSQPEVPNHTNDERA) lie on the Cytoplasmic side of the membrane. The Tyrosine-based internalization motif motif lies at 610-613 (YMPL).

The protein belongs to the VSR (BP-80) family. In terms of tissue distribution, expressed at low levels in seeds, seedlings, roots, stems, leaves, flowers and siliques.

The protein localises to the membrane. Its subcellular location is the golgi apparatus membrane. It localises to the cytoplasmic vesicle. The protein resides in the clathrin-coated vesicle membrane. It is found in the prevacuolar compartment membrane. In terms of biological role, vacuolar-sorting receptor (VSR) involved in clathrin-coated vesicles sorting from Golgi apparatus to vacuoles. The chain is Vacuolar-sorting receptor 4 (VSR4) from Arabidopsis thaliana (Mouse-ear cress).